Reading from the N-terminus, the 445-residue chain is mRNA cleavage and polyadenylation factor CLP1 (445 aa).

ATP contacts are provided by residues E33 and 131 to 136; that span reads SSGKTS.

The protein belongs to the Clp1 family. Clp1 subfamily. Component of a pre-mRNA cleavage factor complex. Interacts directly with PCF11.

The protein resides in the nucleus. In terms of biological role, required for endonucleolytic cleavage during polyadenylation-dependent pre-mRNA 3'-end formation. The chain is mRNA cleavage and polyadenylation factor CLP1 from Eremothecium gossypii (strain ATCC 10895 / CBS 109.51 / FGSC 9923 / NRRL Y-1056) (Yeast).